The primary structure comprises 132 residues: Pollen allergen Phl p 6 (132 aa).

Residues 1 to 22 (MVAMFLAVAVVLGLATSPTAEG) form the signal peptide.

This sequence belongs to the Poa p IX/Phl p VI allergen family.

This Phleum pratense (Common timothy) protein is Pollen allergen Phl p 6 (PHLPVI).